Reading from the N-terminus, the 456-residue chain is ATP synthase subunit beta (456 aa).

135–142 (GGAGVGKT) lines the ATP pocket.

It belongs to the ATPase alpha/beta chains family. As to quaternary structure, F-type ATPases have 2 components, CF(1) - the catalytic core - and CF(0) - the membrane proton channel. CF(1) has five subunits: alpha(3), beta(3), gamma(1), delta(1), epsilon(1). CF(0) has four main subunits: a(1), b(1), b'(1) and c(9-12).

It is found in the cellular thylakoid membrane. It catalyses the reaction ATP + H2O + 4 H(+)(in) = ADP + phosphate + 5 H(+)(out). Produces ATP from ADP in the presence of a proton gradient across the membrane. The catalytic sites are hosted primarily by the beta subunits. The protein is ATP synthase subunit beta (atpD) of Acaryochloris marina (strain MBIC 11017).